Reading from the N-terminus, the 357-residue chain is Chorismate synthase (357 aa).

Arginine 47 is an NADP(+) binding site. FMN-binding positions include 123 to 125, glycine 281, 296 to 300, and arginine 324; these read RSS and KPTSS.

The protein belongs to the chorismate synthase family. As to quaternary structure, homotetramer. FMNH2 serves as cofactor.

The enzyme catalyses 5-O-(1-carboxyvinyl)-3-phosphoshikimate = chorismate + phosphate. It participates in metabolic intermediate biosynthesis; chorismate biosynthesis; chorismate from D-erythrose 4-phosphate and phosphoenolpyruvate: step 7/7. In terms of biological role, catalyzes the anti-1,4-elimination of the C-3 phosphate and the C-6 proR hydrogen from 5-enolpyruvylshikimate-3-phosphate (EPSP) to yield chorismate, which is the branch point compound that serves as the starting substrate for the three terminal pathways of aromatic amino acid biosynthesis. This reaction introduces a second double bond into the aromatic ring system. The chain is Chorismate synthase from Chlamydia muridarum (strain MoPn / Nigg).